Consider the following 178-residue polypeptide: Large ribosomal subunit protein uL6 (178 aa).

It belongs to the universal ribosomal protein uL6 family. As to quaternary structure, part of the 50S ribosomal subunit.

Functionally, this protein binds to the 23S rRNA, and is important in its secondary structure. It is located near the subunit interface in the base of the L7/L12 stalk, and near the tRNA binding site of the peptidyltransferase center. This Streptococcus thermophilus (strain CNRZ 1066) protein is Large ribosomal subunit protein uL6.